The sequence spans 367 residues: tRNA uridine(34) hydroxylase (367 aa).

The Rhodanese domain maps to 159–249 (EDKNSIVVDV…GIISYAHEIS (91 aa)). The active-site Cysteine persulfide intermediate is cysteine 213.

It belongs to the TrhO family.

The catalysed reaction is uridine(34) in tRNA + AH2 + O2 = 5-hydroxyuridine(34) in tRNA + A + H2O. Functionally, catalyzes oxygen-dependent 5-hydroxyuridine (ho5U) modification at position 34 in tRNAs. This chain is tRNA uridine(34) hydroxylase, found in Leptospira borgpetersenii serovar Hardjo-bovis (strain L550).